The following is a 523-amino-acid chain: Glucose-1-phosphate adenylyltransferase large subunit 1, chloroplastic/amyloplastic (523 aa).

The N-terminal 49 residues, 1-49 (MSSMQFSSVLPLEGKACVSPVRREGSACERLKIGDSSSIRHERASRRMC), are a transit peptide targeting the chloroplast.

Belongs to the bacterial/plant glucose-1-phosphate adenylyltransferase family. Heterotetramer. As to expression, starchy endosperm and roots.

Its subcellular location is the plastid. The protein resides in the chloroplast. It localises to the amyloplast. It carries out the reaction alpha-D-glucose 1-phosphate + ATP + H(+) = ADP-alpha-D-glucose + diphosphate. It functions in the pathway glycan biosynthesis; starch biosynthesis. Highly active without 3'phosphoglycerate, and is only slightly affected by the activator 3'phosphoglycerate and inhibitor orthophosphate. Functionally, this protein plays a role in synthesis of starch. It catalyzes the synthesis of the activated glycosyl donor, ADP-glucose from Glc-1-P and ATP. This Hordeum vulgare (Barley) protein is Glucose-1-phosphate adenylyltransferase large subunit 1, chloroplastic/amyloplastic.